The sequence spans 375 residues: Peroxisomal targeting signal 2 receptor (375 aa).

6 WD repeats span residues 58 to 89 (LTQDCLFDLAWNESHENQVLVAQGDGTLRLFD), 102 to 133 (EHEREVFSCNWNLVNRQNFLSSSWDGSIKIWS), 172 to 203 (KNRNCVYQAQFSPHDQNLVLSCSGNSYASLFD), 218 to 249 (HSGLEALTCDFNKYRPYVVATGGVDNAIRIWD), 281 to 312 (AHGLAIRKVTWSPHHSNILMSASYDMTCRIWR), and 340 to 372 (QHSEFVFGADWSLWGKPGYVASTAWDGNLFVWN).

The protein belongs to the WD repeat peroxin-7 family. As to quaternary structure, interacts with PEX21.

The protein localises to the cytoplasm. It localises to the cytosol. It is found in the peroxisome matrix. Its function is as follows. Receptor required for the peroxisomal import of proteins containing a C-terminal PTS2-type peroxisomal targeting signal, such as 3-oxoacyl-CoA thiolase. Specifically binds to cargo proteins containing a PTS2 peroxisomal targeting signal in the cytosol. Cargo protein-binding triggers interaction with PEX21 and formation of a ternary complex composed of PEX21 and PEX7 along with PTS2-containing cargo proteins, which is tranlocated into peroxisomes by passing through the PEX13-PEX14 docking complex. This chain is Peroxisomal targeting signal 2 receptor, found in Saccharomyces cerevisiae (strain ATCC 204508 / S288c) (Baker's yeast).